The sequence spans 256 residues: 5'-nucleotidase SurE (256 aa).

Positions 9, 10, 42, and 95 each coordinate a divalent metal cation.

The protein belongs to the SurE nucleotidase family. A divalent metal cation serves as cofactor.

It is found in the cytoplasm. The catalysed reaction is a ribonucleoside 5'-phosphate + H2O = a ribonucleoside + phosphate. Nucleotidase that shows phosphatase activity on nucleoside 5'-monophosphates. This is 5'-nucleotidase SurE from Campylobacter curvus (strain 525.92).